Consider the following 562-residue polypeptide: MDDNKRPLYLPFAGPAILEAPLINKGSAFSEEERIFFNLEGLVPYAIETIEEQASRAYDQFRSFNNDLDKHIYLRNIQDTNETLFYRLVQNHISEMMPIIYTPTVGLACERFSKNYRRNRGLFISYPNKDRIDDILNNSTRQKVKIIVVTDGERILGLGDQGIGGMGIPIGKLSLYTSCGGISPAYTLPITLDVGTDNPQLLEDPMYMGWRHPRIGGEEYAEFIEAFMQAVHVRWPDTLIQFEDFAQKNAMPILERYKDRYCCFNDDIQGTAAVTVGSLLAACKAAGTELNKQRIAFLGAGSAGCGIAEAIVAQMVSEGISDEQARSQVCMVDRWGLLLDNMPNLLPFQQKLAQKCADICNWNNFSDNISLLDVVNNAKPTVLIGVSGAPGLFTEEIVRAMHSHCERPIIFPLSNPTSRVEATPKDILHWTSGQALVATGSPFEPVVVDGETYEIAQCNNSFIFPGIGLGVLASGARHVSDAMLMASSRALAECSPLAINGSGPLLPKLEDIHSVSKHIAFAVGKVAIEQGLSLPASDELLMQSIEDNFWKPEYRRYKRTSF.

The active-site Proton donor is the tyrosine 101. Arginine 154 serves as a coordination point for NAD(+). The Proton acceptor role is filled by lysine 172. The a divalent metal cation site is built by glutamate 243, aspartate 244, and aspartate 267. 2 residues coordinate NAD(+): aspartate 267 and asparagine 415.

This sequence belongs to the malic enzymes family. In terms of assembly, homotetramer. The cofactor is Mg(2+). Mn(2+) serves as cofactor.

The enzyme catalyses (S)-malate + NAD(+) = pyruvate + CO2 + NADH. The catalysed reaction is oxaloacetate + H(+) = pyruvate + CO2. The polypeptide is NAD-dependent malic enzyme (Shewanella sp. (strain ANA-3)).